The chain runs to 174 residues: Peptidyl-prolyl cis-trans isomerase-like 1 (174 aa).

The 155-residue stretch at 5–159 (SPTYVTFDTS…EEIKIHRARL (155 aa)) folds into the PPIase cyclophilin-type domain.

The protein belongs to the cyclophilin-type PPIase family. PPIL1 subfamily.

The enzyme catalyses [protein]-peptidylproline (omega=180) = [protein]-peptidylproline (omega=0). In terms of biological role, PPIases accelerate the folding of proteins. It catalyzes the cis-trans isomerization of proline imidic peptide bonds in oligopeptides. This chain is Peptidyl-prolyl cis-trans isomerase-like 1 (CYP1), found in Cryptococcus neoformans var. neoformans serotype D (strain B-3501A) (Filobasidiella neoformans).